The chain runs to 305 residues: Protoheme IX farnesyltransferase 1 (305 aa).

9 helical membrane-spanning segments follow: residues 30 to 50, 59 to 79, 108 to 128, 129 to 149, 154 to 176, 180 to 202, 232 to 252, 253 to 273, and 284 to 304; these read IGIV…AFQF, LDVI…SGAM, FVLT…FAAS, FAAG…YSMW, HVSN…FAAV, LGPG…FYAL, LFWI…GIGF, LTLA…GFTA, and FIYS…FAVF.

Belongs to the UbiA prenyltransferase family. Protoheme IX farnesyltransferase subfamily. In terms of assembly, interacts with CtaA.

It localises to the cell membrane. It catalyses the reaction heme b + (2E,6E)-farnesyl diphosphate + H2O = Fe(II)-heme o + diphosphate. The protein operates within porphyrin-containing compound metabolism; heme O biosynthesis; heme O from protoheme: step 1/1. Functionally, converts heme B (protoheme IX) to heme O by substitution of the vinyl group on carbon 2 of heme B porphyrin ring with a hydroxyethyl farnesyl side group. This Lysinibacillus sphaericus (strain C3-41) protein is Protoheme IX farnesyltransferase 1.